A 545-amino-acid chain; its full sequence is CWF19-like protein 1 homolog (545 aa).

The disordered stretch occupies residues 306–329 (YFYDMDGGRRKRQGGDNNKRDKRP).

The protein belongs to the CWF19 family.

The sequence is that of CWF19-like protein 1 homolog from Drosophila melanogaster (Fruit fly).